We begin with the raw amino-acid sequence, 98 residues long: NADH-ubiquinone oxidoreductase chain 4L (98 aa).

3 consecutive transmembrane segments (helical) span residues 1 to 21 (MSMV…GLLV), 30 to 50 (LLCL…TILI), and 61 to 81 (IILL…LVMV).

The protein belongs to the complex I subunit 4L family. Core subunit of respiratory chain NADH dehydrogenase (Complex I) which is composed of 45 different subunits.

It localises to the mitochondrion inner membrane. The catalysed reaction is a ubiquinone + NADH + 5 H(+)(in) = a ubiquinol + NAD(+) + 4 H(+)(out). Core subunit of the mitochondrial membrane respiratory chain NADH dehydrogenase (Complex I) which catalyzes electron transfer from NADH through the respiratory chain, using ubiquinone as an electron acceptor. Part of the enzyme membrane arm which is embedded in the lipid bilayer and involved in proton translocation. This chain is NADH-ubiquinone oxidoreductase chain 4L (MT-ND4L), found in Pagophilus groenlandicus (Harp seal).